A 457-amino-acid polypeptide reads, in one-letter code: Tubulin gamma-2 chain (457 aa).

GTP is bound at residue 142–148 (AGGTGSG).

Belongs to the tubulin family. Interacts with Ote. As to expression, expressed in nurse cells and oocytes of developing egg chambers.

The protein localises to the cytoplasm. Its subcellular location is the cytoskeleton. It is found in the microtubule organizing center. It localises to the centrosome. The protein resides in the spindle. Its function is as follows. Tubulin is the major constituent of microtubules. The gamma chain is found at microtubule organizing centers (MTOC) such as the spindle poles or the centrosome, suggesting that it is involved in the minus-end nucleation of microtubule assembly. Required for oocyte activation and consequently for organization of the female meiotic spindle. Essential for centrosome organization and assembly of biastral mitotic spindles in embryos. Plays a role in stabilizing the augmin complex on the meiotic spindle. The chain is Tubulin gamma-2 chain (gammaTub37C) from Drosophila melanogaster (Fruit fly).